The chain runs to 513 residues: Aspartic proteinase A2 (513 aa).

An N-terminal signal peptide occupies residues 1-24 (MGVYSRAVAFSVFVSFLLFFTAYS). Positions 25-71 (KRNDGTFRVGLKKLKLDPNNRLATRFGSKQEEALRSSLRSYNNNLGG) are cleaved as a propeptide — activation peptide. In terms of domain architecture, Peptidase A1 spans 89-510 (YYGEIAIGTP…DFGNEQVGFA (422 aa)). Residue Asp-107 is part of the active site. Disulfide bonds link Cys-120–Cys-126 and Cys-285–Cys-289. Asp-294 is a catalytic residue. One can recognise a Saposin B-type domain in the interval 319–424 (VVSQQCKTVV…NEICERMPSP (106 aa)). 4 disulfide bridges follow: Cys-324–Cys-418, Cys-349–Cys-390, Cys-355–Cys-387, and Cys-432–Cys-469. Asn-404 carries N-linked (GlcNAc...) asparagine glycosylation.

It belongs to the peptidase A1 family. In terms of tissue distribution, expressed in seed pods and dry seeds.

It is found in the vacuole. Functionally, involved in the breakdown of propeptides of storage proteins in protein-storage vacuoles. This chain is Aspartic proteinase A2 (APA2), found in Arabidopsis thaliana (Mouse-ear cress).